We begin with the raw amino-acid sequence, 121 residues long: Centrocin 2 (121 aa).

A signal peptide spans 1–20; sequence MMIKIAVVLCAVMATSMVFA. Residues 21–50 constitute a propeptide that is removed on maturation; that stretch reads NDVKEQELADLLDLLISEEVSSPDDAVAES. 6'-bromotryptophan occurs at positions 51 and 59. C77 and C112 are disulfide-bonded. Residues 83-106 constitute a propeptide that is removed on maturation; sequence SPQEARAKVLEAFPEMKESDLDEE. Position 107 is a pyrrolidone carboxylic acid (Q107). Position 119 is a histidine amide (H119).

In terms of assembly, heterodimer of a light and a heavy chain, probably disulfide-linked.

Has antimicrobial activity against Gram-negative bacteria, Gram-positive bacteria and against fungi with minimum inhibitory concentration (MIC) between 0.78 uM and 50 uM. Shows little hemolytic activity at concentrations up to 12.5 uM but &gt;50% lysis at 100 uM. The sequence is that of Centrocin 2 from Echinus esculentus (Sea urchin).